The sequence spans 312 residues: Ribosomal protein L11 methyltransferase (312 aa).

Residues Thr160, Gly181, Asp203, and Asn246 each coordinate S-adenosyl-L-methionine.

The protein belongs to the methyltransferase superfamily. PrmA family.

Its subcellular location is the cytoplasm. It carries out the reaction L-lysyl-[protein] + 3 S-adenosyl-L-methionine = N(6),N(6),N(6)-trimethyl-L-lysyl-[protein] + 3 S-adenosyl-L-homocysteine + 3 H(+). Functionally, methylates ribosomal protein L11. The polypeptide is Ribosomal protein L11 methyltransferase (Staphylococcus haemolyticus (strain JCSC1435)).